The sequence spans 592 residues: Colicin-A (592 aa).

2 stretches are compositionally biased toward gly residues: residues 1–13 (MPGFNYGGKGDGT) and 23–34 (PEPGGGSHGNSG). Disordered stretches follow at residues 1-57 (MPGF…PGDS) and 373-395 (RQRQAEEAERQRQAMEVAEKAKD). 2 helical membrane-spanning segments follow: residues 528-548 (WVLSGIASSVALGIFSATLGA) and 555-575 (VPAIAVGIAGILLAAVVGALI).

This sequence belongs to the channel forming colicin family.

It is found in the cell membrane. This colicin is a channel-forming colicin. This class of transmembrane toxins depolarize the cytoplasmic membrane, leading to dissipation of cellular energy. In terms of biological role, colicins are polypeptide toxins produced by and active against E.coli and closely related bacteria. This Citrobacter freundii protein is Colicin-A (caa).